Here is a 189-residue protein sequence, read N- to C-terminus: GTPase NRas (189 aa).

GTP contacts are provided by residues 10-18 (GAGGVGKSA) and 29-30 (VD). An Effector region motif is present at residues 32–40 (YDPTIEDSY). Position 57 to 61 (57 to 61 (DTAGQ)) interacts with GTP. Phosphoserine is present on S89. 116 to 119 (NKCD) contributes to the GTP binding site. A hypervariable region region spans residues 166–185 (YRMKKLNSSDDGTQGCMGLP). Residue K170 forms a Glycyl lysine isopeptide (Lys-Gly) (interchain with G-Cter in ubiquitin) linkage. Residue C181 is the site of S-palmitoyl cysteine attachment. C186 is lipidated: S-farnesyl cysteine. The propeptide at 187–189 (VVM) is removed in mature form.

Belongs to the small GTPase superfamily. Ras family. As to quaternary structure, interacts (active GTP-bound form preferentially) with RGS14. Interacts (active GTP-bound form) with RASSF7. Interacts (active GTP-bound form) with both SHOC2 and PP1c (all isoforms) to form a tertiary complex; SHOC2 and PP1c preferably bind M-Ras/MRAS, but they also bind K-Ras/KRAS, N-Ras/NRAS and H-Ras/HRAS. Palmitoylated by the ZDHHC9-GOLGA7 complex. Depalmitoylated by ABHD17A, ABHD17B and ABHD17C. A continuous cycle of de- and re-palmitoylation regulates rapid exchange between plasma membrane and Golgi. In terms of processing, acetylation at Lys-104 prevents interaction with guanine nucleotide exchange factors (GEFs). Post-translationally, ubiquitinated by the BCR(LZTR1) E3 ubiquitin ligase complex at Lys-170 in a non-degradative manner, leading to inhibit Ras signaling by decreasing Ras association with membranes. Phosphorylation at Ser-89 enhances NRAS association with its downstream effectors.

The protein localises to the cell membrane. It localises to the golgi apparatus membrane. The catalysed reaction is GTP + H2O = GDP + phosphate + H(+). Alternates between an inactive form bound to GDP and an active form bound to GTP. Activated by a guanine nucleotide-exchange factor (GEF) and inactivated by a GTPase-activating protein (GAP). Ras proteins bind GDP/GTP and possess intrinsic GTPase activity. In Pongo abelii (Sumatran orangutan), this protein is GTPase NRas (NRAS).